We begin with the raw amino-acid sequence, 428 residues long: C4-dicarboxylate transport protein (428 aa).

Transmembrane regions (helical) follow at residues 8 to 28, 44 to 64, 76 to 96, 142 to 162, 184 to 206, 222 to 242, 326 to 346, and 352 to 372; these read SLYFQVLTAIAIGILLGHFYP, LIKMIIAPVIFCTVVTGIAGM, VALLYFEIVSTIALIIGLIIV, IGAFASGNILQVLLFAVLFGF, VIFGIINMIMRLAPIGALGAMAF, LIICFYITCILFVVLVLGSIA, IVHQITLLIVLLLSSKGAAGV, and IVLAATLSAVGHLPVAGLALI.

The protein belongs to the dicarboxylate/amino acid:cation symporter (DAACS) (TC 2.A.23) family.

It localises to the cell inner membrane. Its function is as follows. Responsible for the transport of dicarboxylates such as succinate, fumarate, and malate from the periplasm across the membrane. This Shigella flexneri protein is C4-dicarboxylate transport protein.